We begin with the raw amino-acid sequence, 342 residues long: Ferredoxin--NADP reductase (342 aa).

Residues Cys17, Asp36, Gln44, Tyr49, Ile89, Phe124, Asp289, and Thr330 each coordinate FAD.

Belongs to the ferredoxin--NADP reductase type 2 family. As to quaternary structure, homodimer. It depends on FAD as a cofactor.

It carries out the reaction 2 reduced [2Fe-2S]-[ferredoxin] + NADP(+) + H(+) = 2 oxidized [2Fe-2S]-[ferredoxin] + NADPH. This is Ferredoxin--NADP reductase from Rhodopseudomonas palustris (strain BisB18).